Reading from the N-terminus, the 304-residue chain is Pyridoxal 5'-phosphate synthase subunit pyroA (304 aa).

Aspartate 28 contacts D-ribose 5-phosphate. The active-site Schiff-base intermediate with D-ribose 5-phosphate is the lysine 85. Glycine 157 is a D-ribose 5-phosphate binding site. Arginine 169 provides a ligand contact to D-glyceraldehyde 3-phosphate. D-ribose 5-phosphate is bound by residues glycine 224 and 245–246 (GS).

The protein belongs to the PdxS/SNZ family.

The catalysed reaction is aldehydo-D-ribose 5-phosphate + D-glyceraldehyde 3-phosphate + L-glutamine = pyridoxal 5'-phosphate + L-glutamate + phosphate + 3 H2O + H(+). It participates in cofactor biosynthesis; pyridoxal 5'-phosphate biosynthesis. Catalyzes the formation of pyridoxal 5'-phosphate from ribose 5-phosphate (RBP), glyceraldehyde 3-phosphate (G3P) and ammonia. The ammonia is provided by PDX2. Can also use ribulose 5-phosphate and dihydroxyacetone phosphate as substrates, resulting from enzyme-catalyzed isomerization of RBP and G3P, respectively. Also plays an indirect role in resistance to singlet oxygen-generating photosensitizers. This is Pyridoxal 5'-phosphate synthase subunit pyroA (pyroA) from Emericella nidulans (strain FGSC A4 / ATCC 38163 / CBS 112.46 / NRRL 194 / M139) (Aspergillus nidulans).